The primary structure comprises 311 residues: Putative S-adenosyl-L-methionine-dependent methyltransferase MSMEG_0095/MSMEI_0092 (311 aa).

S-adenosyl-L-methionine contacts are provided by residues aspartate 134 and 163–164 (DL).

This sequence belongs to the UPF0677 family.

Exhibits S-adenosyl-L-methionine-dependent methyltransferase activity. The protein is Putative S-adenosyl-L-methionine-dependent methyltransferase MSMEG_0095/MSMEI_0092 of Mycolicibacterium smegmatis (strain ATCC 700084 / mc(2)155) (Mycobacterium smegmatis).